An 872-amino-acid polypeptide reads, in one-letter code: Metabotropic glutamate receptor 2 (872 aa).

An N-terminal signal peptide occupies residues 1-18; sequence MESLLGFLALLLLWGAVA. Residues 19–567 lie on the Extracellular side of the membrane; the sequence is EGPAKKVLTL…QEYIRWGDAW (549 aa). The cysteines at positions 50 and 92 are disulfide-linked. Positions 57, 61, 145, 166, and 168 each coordinate L-glutamate. Residues Asn-203 and Asn-286 are each glycosylated (N-linked (GlcNAc...) asparagine). Disulfide bonds link Cys-234/Cys-518, Cys-355/Cys-362, Cys-400/Cys-407, Cys-500/Cys-519, Cys-504/Cys-522, Cys-525/Cys-537, and Cys-540/Cys-553. Residue Asp-295 coordinates L-glutamate. Asn-338 is a glycosylation site (N-linked (GlcNAc...) asparagine). Lys-377 contacts L-glutamate. Asn-402 carries N-linked (GlcNAc...) asparagine glycosylation. Asn-547 is a glycosylation site (N-linked (GlcNAc...) asparagine). Residues 568–590 form a helical membrane-spanning segment; sequence AVGPVTIACLGALATLFVLGVFV. The Cytoplasmic segment spans residues 591-604; that stretch reads RHNATPVVKASGRE. The helical transmembrane segment at 605–625 threads the bilayer; that stretch reads LCYILLGGVFLCYCMTFVFIA. The Extracellular portion of the chain corresponds to 626 to 636; it reads KPSTAVCTLRR. A disulfide bridge links Cys-632 with Cys-721. Residues 637–655 form a helical membrane-spanning segment; the sequence is LGLGTAFSVCYSALLTKTN. At 656–679 the chain is on the cytoplasmic side; it reads RIARIFGGAREGAQRPRFISPASQ. Positions 677-685 are important for interaction with HTR2A; that stretch reads ASQVAICLA. The helical transmembrane segment at 680 to 700 threads the bilayer; it reads VAICLALISGQLLIVAAWLVV. The Extracellular segment spans residues 701-725; it reads EAPGTGKETAPERREVVTLRCNHRD. The helical transmembrane segment at 726 to 747 threads the bilayer; that stretch reads ASMLGSLAYNVLLIALCTLYAF. Over 748 to 760 the chain is Cytoplasmic; it reads KTRKCPENFNEAK. The chain crosses the membrane as a helical span at residues 761–783; it reads FIGFTMYTTCIIWLAFLPIFYVT. Residues 784–793 lie on the Extracellular side of the membrane; it reads SSDYRVQTTT. A helical membrane pass occupies residues 794-819; that stretch reads MCVSVSLSGSVVLGCLFAPKLHIILF. At 820-872 the chain is on the cytoplasmic side; that stretch reads QPQKNVVSHRAPTSRFGSAAPRASANLGQGSGSQFVPTVCNGREVVDSTTSSL.

This sequence belongs to the G-protein coupled receptor 3 family. As to quaternary structure, forms heterodimers with GRM3 or GRM4. Interacts with GNAI1. Interacts with TAMALIN. Interacts with HTR2A. As to expression, is widely distributed in the CNS and prominent expression is seen in Golgi cells of the cerebellum and some particular neuronal cells in other brain regions.

It is found in the cell membrane. Its subcellular location is the synapse. It localises to the cell projection. The protein resides in the dendrite. Dimeric G protein-coupled receptor which is activated by the excitatory neurotransmitter L-glutamate. Plays critical roles in modulating synaptic transmission and neuronal excitability. Upon activation by glutamate, inhibits presynaptic calcium channels, reducing further glutamate release and dampening excitatory signaling. Mechanistically, ligand binding causes a conformation change that triggers signaling via guanine nucleotide-binding proteins (G proteins) and modulates the activity of down-stream effectors, such as adenylate cyclase. May mediate suppression of neurotransmission or may be involved in synaptogenesis or synaptic stabilization. The polypeptide is Metabotropic glutamate receptor 2 (Grm2) (Rattus norvegicus (Rat)).